The following is an 847-amino-acid chain: Guanine nucleotide exchange factor VAV3 (847 aa).

Residues 1–119 (MEPWKQCAQW…ETLSRLSRTP (119 aa)) enclose the Calponin-homology (CH) domain. Tyrosine 141 is modified (phosphotyrosine). The 180-residue stretch at 192 to 371 (IRSCCLAEIK…KDLAQYVNEV (180 aa)) folds into the DH domain. Positions 400 to 502 (RPQGDGEIRI…WLEQFEMALS (103 aa)) constitute a PH domain. The segment at 513 to 562 (FHDFKMHTFTRVTSCKVCQMLLRGTFYQGYLCFKCGARAHKECLGRVDNC) adopts a Phorbol-ester/DAG-type zinc-finger fold. The segment at 560-847 (DNCGRVNSGE…FPSTYVEEDE (288 aa)) is sufficient for interaction with ROS1. The SH3 1 domain occupies 592 to 660 (PGLPKMQVIR…PSDAVKPCPC (69 aa)). Residues 672-766 (WYAGAMERLQ…TLDTTLQFPY (95 aa)) form the SH2 domain. The SH3 2 domain maps to 788-847 (KVLGIAIARYDFCARDMRELSLLKGDVVKIYTKMSANGWWRGEVNGRVGWFPSTYVEEDE).

As to quaternary structure, interacts with the PH domain of SH2B2. Interacts (via SH2 domains) with the phosphorylated form of EPHA2. Interacts with ROS1; constitutive interaction that mediates VAV3 phosphorylation. In terms of processing, phosphorylated. Phosphorylation can be mediated by ROS1. In osteoclasts, undergoes tyrosine phosphorylation in response to CSF1. In terms of tissue distribution, isoform 1 and isoform 3 are widely expressed; both are expressed at very low levels in skeletal muscle. In keratinocytes, isoform 1 is less abundant than isoform 3. Isoform 3 is detected at very low levels, if any, in adrenal gland, bone marrow, spleen, fetal brain and spinal cord; in these tissues, isoform 1 is readily detectable.

Exchange factor for GTP-binding proteins RhoA, RhoG and, to a lesser extent, Rac1. Binds physically to the nucleotide-free states of those GTPases. Plays an important role in angiogenesis. Its recruitment by phosphorylated EPHA2 is critical for EFNA1-induced RAC1 GTPase activation and vascular endothelial cell migration and assembly. May be important for integrin-mediated signaling, at least in some cell types. In osteoclasts, along with SYK tyrosine kinase, required for signaling through integrin alpha-v/beta-1 (ITAGV-ITGB1), a crucial event for osteoclast proper cytoskeleton organization and function. This signaling pathway involves RAC1, but not RHO, activation. Necessary for proper wound healing. In the course of wound healing, required for the phagocytotic cup formation preceding macrophage phagocytosis of apoptotic neutrophils. Responsible for integrin beta-2 (ITGB2)-mediated macrophage adhesion and, to a lesser extent, contributes to beta-3 (ITGB3)-mediated adhesion. Does not affect integrin beta-1 (ITGB1)-mediated adhesion. In Homo sapiens (Human), this protein is Guanine nucleotide exchange factor VAV3 (VAV3).